The chain runs to 89 residues: Small ribosomal subunit protein uS15 (89 aa).

The protein belongs to the universal ribosomal protein uS15 family. In terms of assembly, part of the 30S ribosomal subunit. Forms a bridge to the 50S subunit in the 70S ribosome, contacting the 23S rRNA.

Its function is as follows. One of the primary rRNA binding proteins, it binds directly to 16S rRNA where it helps nucleate assembly of the platform of the 30S subunit by binding and bridging several RNA helices of the 16S rRNA. In terms of biological role, forms an intersubunit bridge (bridge B4) with the 23S rRNA of the 50S subunit in the ribosome. The protein is Small ribosomal subunit protein uS15 of Parabacteroides distasonis (strain ATCC 8503 / DSM 20701 / CIP 104284 / JCM 5825 / NCTC 11152).